The chain runs to 310 residues: Phosphoribosylaminoimidazole-succinocarboxamide synthase (310 aa).

This sequence belongs to the SAICAR synthetase family.

It carries out the reaction 5-amino-1-(5-phospho-D-ribosyl)imidazole-4-carboxylate + L-aspartate + ATP = (2S)-2-[5-amino-1-(5-phospho-beta-D-ribosyl)imidazole-4-carboxamido]succinate + ADP + phosphate + 2 H(+). The protein operates within purine metabolism; IMP biosynthesis via de novo pathway; 5-amino-1-(5-phospho-D-ribosyl)imidazole-4-carboxamide from 5-amino-1-(5-phospho-D-ribosyl)imidazole-4-carboxylate: step 1/2. The protein is Phosphoribosylaminoimidazole-succinocarboxamide synthase of Stenotrophomonas maltophilia (strain K279a).